Reading from the N-terminus, the 512-residue chain is MRLNSTEISKLIKERIAQFEVFNQSYNEGSIISVSDGIIKINGLSNVMLGEMILLPNNEYAIALNIERDTVGAVVMGPYIHISEGAKVRCTGKILEVPVGDNFLGRVVNALGFPIDGKDSIQNDGFFPVEADAPGVIDRKSVNQPIQTGYKVIDSMIPIGRGQRELIIGDRQTGKTALAIDTIINQKQSGIKCIYVAIGQKLSTIINVVKKLEENNALFNTIIVVASASEAASLQYLAPYSGCAMAEFFRNKGEDSLIIYDDLSKHAVAYRQISLLLRRPPGREAFPGDIFYLHSRLLERASRVSMEYVQKITKNKITGKTGSITALPIIETQSGDVSAFVPTNVISITDGQIFLESNLFNSGIRPAVNPGISVSRVGSAAQTTIIKKLSSGIRTALAQYQELAAFSQFSSDLDDTTRKQLNHGQKITELLKQKQYSPISIAEQALILFVAENNFLDDISIDKITKFEKEILIYAHNYYFDLMEEINKTGDFNIVIKDKFIKLITEFKKNQF.

Position 169–176 (169–176) interacts with ATP; the sequence is GDRQTGKT.

This sequence belongs to the ATPase alpha/beta chains family. In terms of assembly, F-type ATPases have 2 components, CF(1) - the catalytic core - and CF(0) - the membrane proton channel. CF(1) has five subunits: alpha(3), beta(3), gamma(1), delta(1), epsilon(1). CF(0) has three main subunits: a(1), b(2) and c(9-12). The alpha and beta chains form an alternating ring which encloses part of the gamma chain. CF(1) is attached to CF(0) by a central stalk formed by the gamma and epsilon chains, while a peripheral stalk is formed by the delta and b chains.

The protein localises to the cell membrane. The enzyme catalyses ATP + H2O + 4 H(+)(in) = ADP + phosphate + 5 H(+)(out). Its function is as follows. Produces ATP from ADP in the presence of a proton gradient across the membrane. The alpha chain is a regulatory subunit. In Buchnera aphidicola subsp. Acyrthosiphon pisum (strain 5A), this protein is ATP synthase subunit alpha.